Reading from the N-terminus, the 224-residue chain is UPF0173 metal-dependent hydrolase STH3160 (224 aa).

It belongs to the UPF0173 family.

The chain is UPF0173 metal-dependent hydrolase STH3160 from Symbiobacterium thermophilum (strain DSM 24528 / JCM 14929 / IAM 14863 / T).